The chain runs to 141 residues: ATP synthase epsilon chain (141 aa).

Belongs to the ATPase epsilon chain family. F-type ATPases have 2 components, CF(1) - the catalytic core - and CF(0) - the membrane proton channel. CF(1) has five subunits: alpha(3), beta(3), gamma(1), delta(1), epsilon(1). CF(0) has three main subunits: a, b and c.

The protein resides in the cell inner membrane. Its function is as follows. Produces ATP from ADP in the presence of a proton gradient across the membrane. In Bordetella avium (strain 197N), this protein is ATP synthase epsilon chain.